Consider the following 169-residue polypeptide: Peptide deformylase (169 aa).

Fe cation is bound by residues Cys-91 and His-133. The active site involves Glu-134. Position 137 (His-137) interacts with Fe cation.

It belongs to the polypeptide deformylase family. The cofactor is Fe(2+).

It carries out the reaction N-terminal N-formyl-L-methionyl-[peptide] + H2O = N-terminal L-methionyl-[peptide] + formate. In terms of biological role, removes the formyl group from the N-terminal Met of newly synthesized proteins. Requires at least a dipeptide for an efficient rate of reaction. N-terminal L-methionine is a prerequisite for activity but the enzyme has broad specificity at other positions. This is Peptide deformylase from Enterobacter sp. (strain 638).